Consider the following 234-residue polypeptide: Triosephosphate isomerase (234 aa).

Position 8 to 10 (Asn8 to Lys10) interacts with substrate. The active-site Electrophile is His90. Glu159 (proton acceptor) is an active-site residue. Substrate contacts are provided by Gly165 and Ser197.

The protein belongs to the triosephosphate isomerase family. As to quaternary structure, homodimer.

Its subcellular location is the cytoplasm. It catalyses the reaction D-glyceraldehyde 3-phosphate = dihydroxyacetone phosphate. It functions in the pathway carbohydrate biosynthesis; gluconeogenesis. It participates in carbohydrate degradation; glycolysis; D-glyceraldehyde 3-phosphate from glycerone phosphate: step 1/1. In terms of biological role, involved in the gluconeogenesis. Catalyzes stereospecifically the conversion of dihydroxyacetone phosphate (DHAP) to D-glyceraldehyde-3-phosphate (G3P). The polypeptide is Triosephosphate isomerase (Helicobacter pylori (strain P12)).